The sequence spans 149 residues: Large ribosomal subunit protein uL13 (149 aa).

Belongs to the universal ribosomal protein uL13 family. As to quaternary structure, part of the 50S ribosomal subunit.

Functionally, this protein is one of the early assembly proteins of the 50S ribosomal subunit, although it is not seen to bind rRNA by itself. It is important during the early stages of 50S assembly. This Borrelia hermsii (strain HS1 / DAH) protein is Large ribosomal subunit protein uL13.